An 81-amino-acid polypeptide reads, in one-letter code: Three-finger toxin MALT0057C (81 aa).

The N-terminal stretch at 1 to 21 is a signal peptide; the sequence is MKTLLLTLVVVTIVCLDFGHT. 4 disulfide bridges follow: C24–C43, C38–C60, C62–C73, and C74–C79.

It belongs to the three-finger toxin family. Short-chain subfamily. Type I alpha-neurotoxin sub-subfamily. Expressed by the venom gland.

It is found in the secreted. Its function is as follows. Binds to muscle nicotinic acetylcholine receptor (nAChR) and inhibit acetylcholine from binding to the receptor, thereby impairing neuromuscular transmission. The protein is Three-finger toxin MALT0057C of Micrurus altirostris (Uruguayan coral snake).